The primary structure comprises 297 residues: MLSKQVRLLVITGLSGAGKTQALQSLEDQGYFCVDNLPPSLILKFAELCTQSQGKVTRAAIVCDLRGGEFFSSLAEALGDLHREGFHYEILFLEASDEVLVGRYKESRRRHPLSPSGGILEGIQMERQMLTELRGVAHKIMDTSNLSSQQLRHQVAESFGNEQASGHLAVSVVSFGFKYAIPLDVDLLIDVRFLPNPFYVAELRPLTGEHPQVQDYIFSNPVAQEFVDKYLGLLEFILPYYVKEGKRHLVIGVGCTGGQHRSVAIAERIGLFLQERSYMMSVKHRDAARNRKGDKSK.

Gly-13 to Thr-20 serves as a coordination point for ATP. Asp-64–Gly-67 is a binding site for GTP.

This sequence belongs to the RapZ-like family.

Functionally, displays ATPase and GTPase activities. This chain is Nucleotide-binding protein DSY4845, found in Desulfitobacterium hafniense (strain Y51).